A 121-amino-acid polypeptide reads, in one-letter code: Cell division protein FtsB (121 aa).

Topologically, residues 1–6 (MRNWRW) are cytoplasmic. A helical membrane pass occupies residues 7–24 (LLLVLAVLLAWLQYRFWF). Residues 25–121 (GPGNSGEVMM…PASTDPVDHP (97 aa)) are Periplasmic-facing. The stretch at 31-66 (EVMMLEAQVAHQTQDNEGLRQRNQALAAEVKDLKDG) forms a coiled coil. A disordered region spans residues 94–121 (APLPAPASPETAAPAQQAPASTDPVDHP). Positions 101-121 (SPETAAPAQQAPASTDPVDHP) are enriched in low complexity.

The protein belongs to the FtsB family. As to quaternary structure, part of a complex composed of FtsB, FtsL and FtsQ.

It is found in the cell inner membrane. Essential cell division protein. May link together the upstream cell division proteins, which are predominantly cytoplasmic, with the downstream cell division proteins, which are predominantly periplasmic. The polypeptide is Cell division protein FtsB (Xanthomonas oryzae pv. oryzae (strain MAFF 311018)).